The following is a 66-amino-acid chain: Large ribosomal subunit protein bL33 (66 aa).

It belongs to the bacterial ribosomal protein bL33 family.

This is Large ribosomal subunit protein bL33 from Prochlorococcus marinus (strain MIT 9303).